Here is a 637-residue protein sequence, read N- to C-terminus: Chaperone protein DnaK (637 aa).

Residue threonine 198 is modified to Phosphothreonine; by autocatalysis. The interval 597–637 (MYQQAAQESGQTEGAAQDPKGAAQDDDVVDADFEEVKDHKK) is disordered. The span at 600-610 (QAAQESGQTEG) shows a compositional bias: polar residues. Over residues 620–629 (QDDDVVDADF) the composition is skewed to acidic residues.

The protein belongs to the heat shock protein 70 family.

Functionally, acts as a chaperone. The sequence is that of Chaperone protein DnaK from Desulforapulum autotrophicum (strain ATCC 43914 / DSM 3382 / VKM B-1955 / HRM2) (Desulfobacterium autotrophicum).